Reading from the N-terminus, the 118-residue chain is Large ribosomal subunit protein uL18 (118 aa).

This sequence belongs to the universal ribosomal protein uL18 family. As to quaternary structure, part of the 50S ribosomal subunit; part of the 5S rRNA/L5/L18/L25 subcomplex. Contacts the 5S and 23S rRNAs.

Functionally, this is one of the proteins that bind and probably mediate the attachment of the 5S RNA into the large ribosomal subunit, where it forms part of the central protuberance. This is Large ribosomal subunit protein uL18 from Campylobacter jejuni subsp. doylei (strain ATCC BAA-1458 / RM4099 / 269.97).